Consider the following 399-residue polypeptide: Octopine dehydrogenase (399 aa).

Residues 10-13 and 35-38 contribute to the NADH site; these read GGNG and FADE. Gln118 and Thr143 together coordinate pyruvate. Gln118 provides a ligand contact to substrate. Cys148 is an NAD(+) binding site. L-arginine is bound at residue Met206. His212 serves as a coordination point for pyruvate. The active site involves His212. Arg324 provides a ligand contact to NAD(+).

This sequence belongs to the lysopine/nopaline/octopine/opine/vitopine dehydrogenases family.

The enzyme catalyses D-octopine + NAD(+) + H2O = L-arginine + pyruvate + NADH + H(+). Agmatine acts as a competitive inhibitor of the condensation reaction where the L-arginine and agmatine substrates compete for the same site. Functionally, catalyzes the reverse reaction of octopine dehydrogenation. Acts on L-arginine in preference to other substrates such as canavanine, cysteine, L-alanine, ornithine or norvaline, owing to the presence of the positively charged guanidium group. This chain is Octopine dehydrogenase, found in Pecten maximus (King scallop).